The sequence spans 294 residues: Ribosomal protein L11 methyltransferase (294 aa).

The S-adenosyl-L-methionine site is built by Thr-145, Gly-166, Asp-188, and Asn-230.

This sequence belongs to the methyltransferase superfamily. PrmA family.

The protein resides in the cytoplasm. The enzyme catalyses L-lysyl-[protein] + 3 S-adenosyl-L-methionine = N(6),N(6),N(6)-trimethyl-L-lysyl-[protein] + 3 S-adenosyl-L-homocysteine + 3 H(+). Its function is as follows. Methylates ribosomal protein L11. This is Ribosomal protein L11 methyltransferase from Glaesserella parasuis serovar 5 (strain SH0165) (Haemophilus parasuis).